Reading from the N-terminus, the 190-residue chain is ADP-ribosylation factor-like protein 6 (190 aa).

Gly2 is lipidated: N-myristoyl glycine. GTP-binding positions include 24-31 (GLDNSGKT), 69-73 (DMAGQ), and 130-133 (NKMD).

The protein belongs to the small GTPase superfamily. Arf family. As to expression, specifically expressed in ciliated cells.

It localises to the cytoplasm. The protein is ADP-ribosylation factor-like protein 6 of Caenorhabditis elegans.